We begin with the raw amino-acid sequence, 241 residues long: Phosphoribosylaminoimidazole-succinocarboxamide synthase (241 aa).

This sequence belongs to the SAICAR synthetase family.

It catalyses the reaction 5-amino-1-(5-phospho-D-ribosyl)imidazole-4-carboxylate + L-aspartate + ATP = (2S)-2-[5-amino-1-(5-phospho-beta-D-ribosyl)imidazole-4-carboxamido]succinate + ADP + phosphate + 2 H(+). Its pathway is purine metabolism; IMP biosynthesis via de novo pathway; 5-amino-1-(5-phospho-D-ribosyl)imidazole-4-carboxamide from 5-amino-1-(5-phospho-D-ribosyl)imidazole-4-carboxylate: step 1/2. This chain is Phosphoribosylaminoimidazole-succinocarboxamide synthase, found in Lacticaseibacillus casei (strain BL23) (Lactobacillus casei).